The sequence spans 576 residues: Dihydroxy-acid dehydratase (576 aa).

Residue C56 coordinates [2Fe-2S] cluster. D88 lines the Mg(2+) pocket. C129 is a [2Fe-2S] cluster binding site. Mg(2+) contacts are provided by D130 and K131. K131 carries the N6-carboxylysine modification. C201 contributes to the [2Fe-2S] cluster binding site. E453 is a binding site for Mg(2+). S479 acts as the Proton acceptor in catalysis.

The protein belongs to the IlvD/Edd family. As to quaternary structure, homodimer. [2Fe-2S] cluster is required as a cofactor. Requires Mg(2+) as cofactor.

It catalyses the reaction (2R)-2,3-dihydroxy-3-methylbutanoate = 3-methyl-2-oxobutanoate + H2O. The catalysed reaction is (2R,3R)-2,3-dihydroxy-3-methylpentanoate = (S)-3-methyl-2-oxopentanoate + H2O. It participates in amino-acid biosynthesis; L-isoleucine biosynthesis; L-isoleucine from 2-oxobutanoate: step 3/4. It functions in the pathway amino-acid biosynthesis; L-valine biosynthesis; L-valine from pyruvate: step 3/4. Functionally, functions in the biosynthesis of branched-chain amino acids. Catalyzes the dehydration of (2R,3R)-2,3-dihydroxy-3-methylpentanoate (2,3-dihydroxy-3-methylvalerate) into 2-oxo-3-methylpentanoate (2-oxo-3-methylvalerate) and of (2R)-2,3-dihydroxy-3-methylbutanoate (2,3-dihydroxyisovalerate) into 2-oxo-3-methylbutanoate (2-oxoisovalerate), the penultimate precursor to L-isoleucine and L-valine, respectively. The protein is Dihydroxy-acid dehydratase of Parvibaculum lavamentivorans (strain DS-1 / DSM 13023 / NCIMB 13966).